The sequence spans 1199 residues: Chromosome partition protein Smc (1199 aa).

Residue 32–39 (PNGSGKSN) participates in ATP binding. Residues 192-528 (GVAEFDEKSE…NARIKTLKDM (337 aa)) adopt a coiled-coil conformation. The 113-residue stretch at 546–658 (PGVVDIAGNL…VDNLENAKKL (113 aa)) folds into the SMC hinge domain. The stretch at 691-1051 (IKVDIDMKKL…YLQLISEVQK (361 aa)) forms a coiled coil.

Belongs to the SMC family. In terms of assembly, homodimer.

It is found in the cytoplasm. In terms of biological role, required for chromosome condensation and partitioning. This is Chromosome partition protein Smc from Methanococcus voltae.